A 26-amino-acid chain; its full sequence is LLCISCCVSITECCQLMSGCAVEIKS.

Contains 3 disulfide bonds. Expressed by the venom duct.

Its subcellular location is the secreted. Functionally, acts as a neurotoxin by inhibiting an ion channel. The sequence is that of Turripeptide OL49 from Iotyrris olangoensis (Sea snail).